Consider the following 174-residue polypeptide: uncharacterized protein (174 aa).

A helical transmembrane segment spans residues 7-24 (LLLLAFAVCLAVGFSGCL).

It is found in the membrane. This is an uncharacterized protein from Methanocaldococcus jannaschii (strain ATCC 43067 / DSM 2661 / JAL-1 / JCM 10045 / NBRC 100440) (Methanococcus jannaschii).